Consider the following 211-residue polypeptide: MIERTFIAENVSETLIDEYFKGKLVRAGYSHLELKKTPIGTRITVFAEKPGFVIGRKGKMVKELTDTLTEVYKVENPQIEVKPLETPDLDPAIVGHKIAASLEKGMHFRKTAHSAVRRVMAAGAKGVAIIISGKLSGERSRTEKFMDGYMKHCGEPAEELVIKSHQLAKLKLGIVGVTVKIMRPDVSLPDEIIILSGEIKEVTEFSEVSQE.

Residues 16–85 form the KH type-2 domain; it reads IDEYFKGKLV…NPQIEVKPLE (70 aa).

The protein belongs to the universal ribosomal protein uS3 family. As to quaternary structure, part of the 30S ribosomal subunit.

Binds the lower part of the 30S subunit head. The sequence is that of Small ribosomal subunit protein uS3 from Methanococcus vannielii (strain ATCC 35089 / DSM 1224 / JCM 13029 / OCM 148 / SB).